A 429-amino-acid chain; its full sequence is 3-phosphoshikimate 1-carboxyvinyltransferase (429 aa).

The 3-phosphoshikimate site is built by Lys-23, Ser-24, and Arg-28. Position 23 (Lys-23) interacts with phosphoenolpyruvate. Residues Gly-95 and Arg-123 each coordinate phosphoenolpyruvate. Ser-168, Gln-170, Asp-316, and Lys-343 together coordinate 3-phosphoshikimate. Gln-170 is a phosphoenolpyruvate binding site. Catalysis depends on Asp-316, which acts as the Proton acceptor. Residues Arg-347 and Arg-389 each contribute to the phosphoenolpyruvate site.

The protein belongs to the EPSP synthase family. Monomer.

The protein resides in the cytoplasm. The enzyme catalyses 3-phosphoshikimate + phosphoenolpyruvate = 5-O-(1-carboxyvinyl)-3-phosphoshikimate + phosphate. The protein operates within metabolic intermediate biosynthesis; chorismate biosynthesis; chorismate from D-erythrose 4-phosphate and phosphoenolpyruvate: step 6/7. Functionally, catalyzes the transfer of the enolpyruvyl moiety of phosphoenolpyruvate (PEP) to the 5-hydroxyl of shikimate-3-phosphate (S3P) to produce enolpyruvyl shikimate-3-phosphate and inorganic phosphate. This is 3-phosphoshikimate 1-carboxyvinyltransferase from Bacillus cereus (strain AH187).